We begin with the raw amino-acid sequence, 3658 residues long: E3 ubiquitin-protein ligase UPL2 (3658 aa).

The span at 884–893 (DEKKSVDRAS) shows a compositional bias: basic and acidic residues. The interval 884-914 (DEKKSVDRASDNSVSASSSTAERESDEDSSN) is disordered. Positions 894–903 (DNSVSASSST) are enriched in low complexity. Residues 1271–1312 (QPDEAIVGMIVEMGFSRSRAEDALRRVGTNSVEMAMDWLFTN) form the UBA domain. The 20-residue stretch at 1318-1337 (QEDDELAQALALSLGNSSET) folds into the UIM domain. 9 disordered regions span residues 1331–1360 (LGNS…KEPP), 1702–1733 (VSGS…SKSH), 2004–2038 (AEQL…VDEL), 2052–2072 (VDNG…RGSS), 2113–2204 (HVED…DDMV), 2293–2313 (PLFS…SAGS), 2417–2487 (ERET…EGGG), 2503–2591 (SAQG…PEVN), and 2958–2987 (SPSS…AESE). The span at 1338–1347 (PKLEDTEKPV) shows a compositional bias: basic and acidic residues. Basic and acidic residues predominate over residues 2007-2027 (LKSEVPNEQKNTDSDERHDSH). Residues 2028–2038 (GTSTSTEVDEL) are compositionally biased toward polar residues. 2 stretches are compositionally biased toward acidic residues: residues 2117-2144 (RADD…DSVE) and 2156-2204 (DVED…DDMV). Positions 2297 to 2313 (RPSQTGNTASVSASAGS) are enriched in polar residues. The span at 2422-2431 (TTEVQEQQQP) shows a compositional bias: low complexity. The span at 2503–2518 (SAQGQSDTSGIQNVSV) shows a compositional bias: polar residues. Position 2582 is a phosphoserine (Ser2582). Positions 3317-3658 (SPQDLKGRLN…HEANEGFGFA (342 aa)) constitute an HECT domain. The Glycyl thioester intermediate role is filled by Cys3625.

Belongs to the UPL family. TOM1/PTR1 subfamily. As to expression, widely expressed. Expressed in root, stem, cauline and rosette leaf, seedling and flower (at protein level).

It carries out the reaction S-ubiquitinyl-[E2 ubiquitin-conjugating enzyme]-L-cysteine + [acceptor protein]-L-lysine = [E2 ubiquitin-conjugating enzyme]-L-cysteine + N(6)-ubiquitinyl-[acceptor protein]-L-lysine.. It participates in protein modification; protein ubiquitination. In terms of biological role, probable E3 ubiquitin-protein ligase which mediates ubiquitination and subsequent proteasomal degradation of target proteins. The polypeptide is E3 ubiquitin-protein ligase UPL2 (UPL2) (Arabidopsis thaliana (Mouse-ear cress)).